A 771-amino-acid chain; its full sequence is Rho GTPase-activating protein 26 (771 aa).

The 256-residue stretch at 7-262 folds into the BAR domain; the sequence is EFSDCYLDSP…MKENPHEHLA (256 aa). The region spanning 265-369 is the PH domain; it reads PFTMEGYLYV…WMEAMDGREP (105 aa). Residues 383 to 568 form the Rho-GAP domain; it reads AQLDNIGFSI…IIIENYEEMF (186 aa). Residues 575-712 form a disordered region; sequence PQTNSQLHLS…SSTSSDSSPV (138 aa). The segment covering 608–617 has biased composition (basic and acidic residues); it reads HSSEKEEKRN. A compositionally biased stretch (low complexity) spans 618–637; sequence SVNSSAESVSSSNANSSVNS. 2 stretches are compositionally biased toward polar residues: residues 638 to 650 and 662 to 671; these read TCTQRSNMNNLNA and RPNSLLNPKN. Low complexity-rich tracts occupy residues 673 to 683 and 691 to 712; these read SGLLPSSLNPS and PMVSAPSSPMPTSSTSSDSSPV. Residues 713 to 771 form the SH3 domain; the sequence is SVPRKAKALYACKAEHDSELSFSAGTVFENVCPSQEPGWLEGTLNGKTGLIPENYVEFL.

The protein localises to the cell junction. Its subcellular location is the focal adhesion. The protein resides in the cytoplasm. It localises to the cytoskeleton. It is found in the endosome membrane. In terms of biological role, GTPase-activating protein for rhoa and cdc42. May be involved in the regulation of neosynthesized protein export through a Rab-endososomal dependent export route. The polypeptide is Rho GTPase-activating protein 26 (arhgap26) (Xenopus laevis (African clawed frog)).